A 33-amino-acid chain; its full sequence is Alpha-amanitin proprotein (33 aa).

Positions 1–10 are excised as a propeptide; sequence MSDINATRLP. Isoleucine 11 carries the (3R,4R)-4,5-dihydroxyisoleucine; in form alpha-amanitin modification. Residue isoleucine 11 is modified to (3R,4S)-4-hydroxyisoleucine; in form gamma-amanitin. The segment at residues 11–18 is a cross-link (cyclopeptide (Ile-Pro)); it reads IWGIGCNP. A cross-link (2'-cysteinyl-6'-hydroxytryptophan sulfoxide (Trp-Cys)) is located at residues 12-16; that stretch reads WGIGC. At proline 18 the chain carries 4-hydroxyproline. Positions 19–33 are excised as a propeptide; the sequence is SVGDEVTALLTSGEA.

It belongs to the MSDIN fungal toxin family. Post-translationally, processed by the macrocyclase-peptidase enzyme POPB to yield a toxic cyclic decapeptide. POPB first removes 10 residues from the N-terminus. Conformational trapping of the remaining peptide forces the enzyme to release this intermediate rather than proceed to macrocyclization. The enzyme rebinds the remaining peptide in a different conformation and catalyzes macrocyclization of the N-terminal 8 residues.

In terms of biological role, major toxin belonging to the bicyclic octapeptides amatoxins that acts by binding non-competitively to RNA polymerase II and greatly slowing the elongation of transcripts from target promoters. This Amanita fuliginea (East Asian brown death cap) protein is Alpha-amanitin proprotein.